The primary structure comprises 319 residues: MTLITLIINPLMYIIPILLAMAFLTLVERKMLGYMQLRKGPNIVGPYGLLQPIADGVKLFIKEPVKPSTSSPTLFLLTPTLALTLALILWIPLPMPLALTDLNLTILFILAVSSLSVYSILGSGWASNSKYALIGALRAVAQTISYEVTLGLIIISLIMFTGGFTLTTFNTAQEAVWLILPAWPLAAMWFISTLAETNRAPFDLTEGESELVSGFNVEYAGGPFALFFLAEYTNILLMNALSTILFLGPSFNTLTINLNWAIKTMILASMFLWVRASYPRFRYDQLMHLVWKNFLPLTLALITWHISLPISMAGSPPQL.

8 consecutive transmembrane segments (helical) span residues 3–23 (LITL…AMAF), 74–94 (LFLL…IPLP), 106–126 (ILFI…SGWA), 149–169 (TLGL…LTTF), 175–195 (AVWL…STLA), 226–246 (LFFL…TILF), 254–274 (LTIN…FLWV), and 294–314 (FLPL…SMAG).

The protein belongs to the complex I subunit 1 family.

The protein localises to the mitochondrion inner membrane. It catalyses the reaction a ubiquinone + NADH + 5 H(+)(in) = a ubiquinol + NAD(+) + 4 H(+)(out). Core subunit of the mitochondrial membrane respiratory chain NADH dehydrogenase (Complex I) that is believed to belong to the minimal assembly required for catalysis. Complex I functions in the transfer of electrons from NADH to the respiratory chain. The immediate electron acceptor for the enzyme is believed to be ubiquinone. The polypeptide is NADH-ubiquinone oxidoreductase chain 1 (MT-ND1) (Polypterus ornatipinnis (Ornate bichir)).